Consider the following 213-residue polypeptide: BREX protein BrxA (213 aa).

Belongs to the BrxA family.

BREX systems (bacteriophage exclusion) provide immunity against bacteriophage. A probably non-essential part of a type 1 BREX system which protects against dsDNA phage. This system allows phage adsorption but prevents phage DNA replication, without degradation of the phage DNA. Methylation of bacterial DNA by PglX guides self/non-self discrimination. When the brxA-brxB-brxC-pglX-pglZ-brxL genes are transformed into a susceptible E.coli strain (BW25113) they confer very high resistance to infection by bacteriophage VR7 and VpaE1, about 100-fold protection against lambda, T5 and T7 and no protection against RNA phage Qbeta, ssDNA phage M13 or dSDNA phage T4 and VR5. Glycosylated phage DNA is not susceptible to BREX. The BREX system does not confer resistance to lysogenic lambda phage, i.e. prophage that are integrated into the chromosomal DNA and then induced to form phage. In Escherichia coli O9:H4 (strain HS), this protein is BREX protein BrxA.